Reading from the N-terminus, the 345-residue chain is Anthranilate phosphoribosyltransferase (345 aa).

Residues Gly-84, 87 to 88 (GD), Thr-92, 94 to 97 (NIST), 112 to 120 (KHGGRSVSS), and Ser-124 contribute to the 5-phospho-alpha-D-ribose 1-diphosphate site. Gly-84 provides a ligand contact to anthranilate. Ser-96 is a Mg(2+) binding site. Arg-170 contacts anthranilate. Mg(2+) contacts are provided by Asp-229 and Glu-230.

It belongs to the anthranilate phosphoribosyltransferase family. In terms of assembly, homodimer. It depends on Mg(2+) as a cofactor.

The enzyme catalyses N-(5-phospho-beta-D-ribosyl)anthranilate + diphosphate = 5-phospho-alpha-D-ribose 1-diphosphate + anthranilate. The protein operates within amino-acid biosynthesis; L-tryptophan biosynthesis; L-tryptophan from chorismate: step 2/5. Functionally, catalyzes the transfer of the phosphoribosyl group of 5-phosphorylribose-1-pyrophosphate (PRPP) to anthranilate to yield N-(5'-phosphoribosyl)-anthranilate (PRA). This is Anthranilate phosphoribosyltransferase from Leptothrix cholodnii (strain ATCC 51168 / LMG 8142 / SP-6) (Leptothrix discophora (strain SP-6)).